The sequence spans 488 residues: Facilitated trehalose transporter Tret1-2 homolog (488 aa).

The Cytoplasmic segment spans residues 1 to 28 (MKILMRADTHVSYSVPAEGTKANFTFSQ). A helical transmembrane segment spans residues 29 to 49 (VLAALSVSLCSLVVGFVSAYT). Over 50–72 (SPALVSMTDRTITSFEVTKDAGS) the chain is Extracellular. The helical transmembrane segment at 73–93 (WVGGIMPLAALAGGITGGPLI) threads the bilayer. At 94–105 (EYLGRRNTILAT) the chain is on the cytoplasmic side. Residues 106-126 (AVPFIVSSLLIACAVNVIMIL) form a helical membrane-spanning segment. Topologically, residues 127–129 (CGR) are extracellular. A helical transmembrane segment spans residues 130–150 (FLTGFCVGIASLSLPVYLGET). Topologically, residues 151 to 160 (LQPEVRGTLG) are cytoplasmic. A helical membrane pass occupies residues 161–181 (LLPTALGNIGILVCYVAGSFM). The N-linked (GlcNAc...) asparagine glycan is linked to Asn182. Topologically, residues 182 to 184 (NWS) are extracellular. A helical transmembrane segment spans residues 185–205 (ILAFLGAALPVPFLILMIIIP). At 206–268 (ETPRWFVNRG…ELFKRINLKP (63 aa)) the chain is on the cytoplasmic side. The helical transmembrane segment at 269 to 289 (LSISLGLMFFQQFSGINAVIF) threads the bilayer. At 290 to 305 (YTVQIFKDAGSTIDSN) the chain is on the extracellular side. A helical transmembrane segment spans residues 306 to 326 (LCTIIVGIVNFFATFMGIILI). The Cytoplasmic segment spans residues 327–332 (DRLGRK). A helical transmembrane segment spans residues 333-353 (ILLYVSDIAMILTLSILGGFF). At 354-372 (YCKAHGPDVSHLGWLPLSC) the chain is on the extracellular side. The chain crosses the membrane as a helical span at residues 373-393 (FVIYILGFSLGFGPIPWLMMG). The Cytoplasmic segment spans residues 394–402 (EILPAKIRG). Residues 403–423 (PAASVVTAFNWFCTFVVTKTF) traverse the membrane as a helical segment. Over 424–433 (QDLTVAMGPH) the chain is Extracellular. Residues 434–454 (GAFWLFGVVCIVGLFFVIIYV) traverse the membrane as a helical segment. Topologically, residues 455–488 (PETRGKSLEEIERKMMGRVPISAVVNIKPFSFNM) are cytoplasmic.

It belongs to the major facilitator superfamily. Sugar transporter (TC 2.A.1.1) family. Trehalose transporter subfamily.

The protein resides in the cell membrane. In terms of biological role, fails to transport trehalose. The protein is Facilitated trehalose transporter Tret1-2 homolog of Drosophila sechellia (Fruit fly).